Here is an 840-residue protein sequence, read N- to C-terminus: Urease (840 aa).

In terms of domain architecture, Urease spans 402 to 840 (GAIDCHVHYI…VPLSRNYFLF (439 aa)). Ni(2+) contacts are provided by histidine 407, histidine 409, and lysine 490. Lysine 490 carries the N6-carboxylysine modification. Histidine 492 is a binding site for substrate. 2 residues coordinate Ni(2+): histidine 519 and histidine 545. The Proton donor role is filled by histidine 593. Aspartate 633 contacts Ni(2+).

The protein in the C-terminal section; belongs to the metallo-dependent hydrolases superfamily. Urease alpha subunit family. In terms of assembly, homohexamer. Other oligomeric forms may exist depending on pH and presence of salts. Requires Ni cation as cofactor. In terms of processing, carboxylation allows a single lysine to coordinate two nickel ions.

The catalysed reaction is urea + 2 H2O + H(+) = hydrogencarbonate + 2 NH4(+). It participates in nitrogen metabolism; urea degradation; CO(2) and NH(3) from urea (urease route): step 1/1. With respect to regulation, P-hydroxymercuribenzoate irreversibly abolishes ureolytic activity, but does not inhibit the ability to activate platelets. Also inhibited by acetohydroxamic acid (AHA), a chelator of Ni2+ and Zn2+ ions. Functionally, urea hydrolase involved in nitrogen recycling from ureide, purine, and arginine catabolism. Is known to be highly toxic and lethal when given by intravenous route, producing convulsions and other signs of central nervous system intoxication associated with the high levels of ammonia formed in the blood of mice and rabbits. Is neurotoxic in mammals, when directly injected into hippocampus. It may induce seizures by acting at a neuronal network level, thereby disturbing electroencephalographic rhythms and causing metabolic alterations in key areas related to epileptogenesis and to neurogenic pulmonary edema. It increases calcium influx and neuronal firing rate in the hippocampus. Is able to insert itself into lipid bilayers, altering physicochemical properties of artificial membranes, and forming cation-selective ion channels. In vitro, has the ability to induce platelet aggregation, platelet granules secretion and release of ATP. In contrast to canatoxin, another urease from C.ensiformis, is not lethal to mice when intraperitoneally injected. The chain is Urease from Canavalia ensiformis (Jack bean).